Here is a 276-residue protein sequence, read N- to C-terminus: 2-dehydro-3-deoxyphosphooctonate aldolase (276 aa).

It belongs to the KdsA family.

It is found in the cytoplasm. The enzyme catalyses D-arabinose 5-phosphate + phosphoenolpyruvate + H2O = 3-deoxy-alpha-D-manno-2-octulosonate-8-phosphate + phosphate. It functions in the pathway carbohydrate biosynthesis; 3-deoxy-D-manno-octulosonate biosynthesis; 3-deoxy-D-manno-octulosonate from D-ribulose 5-phosphate: step 2/3. Its pathway is bacterial outer membrane biogenesis; lipopolysaccharide biosynthesis. The protein is 2-dehydro-3-deoxyphosphooctonate aldolase of Helicobacter pylori (strain HPAG1).